Here is a 156-residue protein sequence, read N- to C-terminus: Arginine repressor (156 aa).

It belongs to the ArgR family.

The protein localises to the cytoplasm. It functions in the pathway amino-acid biosynthesis; L-arginine biosynthesis [regulation]. Functionally, regulates arginine biosynthesis genes. This Shewanella putrefaciens (strain CN-32 / ATCC BAA-453) protein is Arginine repressor.